The primary structure comprises 238 residues: Oil body-associated protein 1A (238 aa).

This sequence belongs to the OBAP family. As to expression, expressed in seeds, but not in leaves or roots. Highest expression in scutellum. Detected in embryo axis and endosperm.

It localises to the lipid droplet. This Zea mays (Maize) protein is Oil body-associated protein 1A.